Consider the following 248-residue polypeptide: Protein GrpE (248 aa).

The segment at 229-248 (AAPKEDTLPAQENQSSPADS) is disordered. Residues 238 to 248 (AQENQSSPADS) show a composition bias toward polar residues.

The protein belongs to the GrpE family. In terms of assembly, homodimer.

The protein localises to the cytoplasm. Its function is as follows. Participates actively in the response to hyperosmotic and heat shock by preventing the aggregation of stress-denatured proteins, in association with DnaK and GrpE. It is the nucleotide exchange factor for DnaK and may function as a thermosensor. Unfolded proteins bind initially to DnaJ; upon interaction with the DnaJ-bound protein, DnaK hydrolyzes its bound ATP, resulting in the formation of a stable complex. GrpE releases ADP from DnaK; ATP binding to DnaK triggers the release of the substrate protein, thus completing the reaction cycle. Several rounds of ATP-dependent interactions between DnaJ, DnaK and GrpE are required for fully efficient folding. The sequence is that of Protein GrpE from Trichormus variabilis (strain ATCC 29413 / PCC 7937) (Anabaena variabilis).